The sequence spans 417 residues: Phosphoglycerate kinase 2 (417 aa).

Residue serine 4 is modified to Phosphoserine. Lysine 11 bears the N6-acetyllysine mark. (2R)-3-phosphoglycerate-binding residues include valine 23, aspartate 24, phenylalanine 25, asparagine 26, glutamine 38, and arginine 39. Lysine 48 is modified (N6-acetyllysine). 4 residues coordinate (2R)-3-phosphoglycerate: serine 62, histidine 63, glycine 65, and arginine 66. N6-acetyllysine occurs at positions 75, 86, and 97. Residues leucine 122 and arginine 123 each contribute to the (2R)-3-phosphoglycerate site. An N6-acetyllysine mark is found at lysine 131 and lysine 146. (2R)-3-phosphoglycerate contacts are provided by histidine 170 and arginine 171. Tyrosine 196 is subject to Phosphotyrosine. Residue lysine 199 is modified to N6-acetyllysine. Glycine 214 provides a ligand contact to ADP. Glycine 214 contributes to the CDP binding site. AMP is bound by residues alanine 215 and lysine 216. ATP is bound at residue alanine 215. Alanine 215 is a Mg(2+) binding site. CDP is bound at residue aspartate 219. Position 219 (aspartate 219) interacts with Mg(2+). AMP is bound at residue lysine 220. Residue lysine 220 coordinates ATP. Position 238 (glycine 238) interacts with ADP. Glycine 238 serves as a coordination point for CDP. Position 239 (glycine 239) interacts with AMP. Glycine 239 is a binding site for ATP. An N6-acetyllysine mark is found at lysine 267 and lysine 291. Glycine 313 is a binding site for AMP. Glycine 313 contributes to the ATP binding site. Glycine 338, isoleucine 340, and phenylalanine 343 together coordinate CDP. Phenylalanine 343 is an ADP binding site. Glutamate 344 is a binding site for AMP. 3 residues coordinate ATP: glutamate 344, aspartate 375, and threonine 376. Mg(2+) is bound at residue aspartate 375.

Belongs to the phosphoglycerate kinase family. In terms of assembly, monomer. It depends on Mg(2+) as a cofactor. In terms of tissue distribution, testis and sperm. Localized on the principle piece in the sperm (at protein level). Testis-specific.

The protein localises to the cytoplasm. It carries out the reaction (2R)-3-phosphoglycerate + ATP = (2R)-3-phospho-glyceroyl phosphate + ADP. It participates in carbohydrate degradation; glycolysis; pyruvate from D-glyceraldehyde 3-phosphate: step 2/5. Functionally, essential for sperm motility and male fertility but is not required for the completion of spermatogenesis. In Mus musculus (Mouse), this protein is Phosphoglycerate kinase 2 (Pgk2).